A 301-amino-acid polypeptide reads, in one-letter code: Phosphatidylserine decarboxylase proenzyme (301 aa).

Active-site charge relay system; for autoendoproteolytic cleavage activity residues include Asp117, His173, and Ser260. The Schiff-base intermediate with substrate; via pyruvic acid; for decarboxylase activity role is filled by Ser260. Residue Ser260 is modified to Pyruvic acid (Ser); by autocatalysis.

This sequence belongs to the phosphatidylserine decarboxylase family. PSD-B subfamily. Prokaryotic type II sub-subfamily. Heterodimer of a large membrane-associated beta subunit and a small pyruvoyl-containing alpha subunit. The cofactor is pyruvate. Is synthesized initially as an inactive proenzyme. Formation of the active enzyme involves a self-maturation process in which the active site pyruvoyl group is generated from an internal serine residue via an autocatalytic post-translational modification. Two non-identical subunits are generated from the proenzyme in this reaction, and the pyruvate is formed at the N-terminus of the alpha chain, which is derived from the carboxyl end of the proenzyme. The autoendoproteolytic cleavage occurs by a canonical serine protease mechanism, in which the side chain hydroxyl group of the serine supplies its oxygen atom to form the C-terminus of the beta chain, while the remainder of the serine residue undergoes an oxidative deamination to produce ammonia and the pyruvoyl prosthetic group on the alpha chain. During this reaction, the Ser that is part of the protease active site of the proenzyme becomes the pyruvoyl prosthetic group, which constitutes an essential element of the active site of the mature decarboxylase.

It localises to the cell membrane. The enzyme catalyses a 1,2-diacyl-sn-glycero-3-phospho-L-serine + H(+) = a 1,2-diacyl-sn-glycero-3-phosphoethanolamine + CO2. It functions in the pathway phospholipid metabolism; phosphatidylethanolamine biosynthesis; phosphatidylethanolamine from CDP-diacylglycerol: step 2/2. In terms of biological role, catalyzes the formation of phosphatidylethanolamine (PtdEtn) from phosphatidylserine (PtdSer). This Chlamydia muridarum (strain MoPn / Nigg) protein is Phosphatidylserine decarboxylase proenzyme.